A 72-amino-acid chain; its full sequence is DNA-directed RNA polymerase subunit epsilon (72 aa).

Belongs to the RNA polymerase subunit epsilon family. RNAP is composed of a core of 2 alpha, a beta and a beta' subunit. The core is associated with a delta subunit, and at least one of epsilon or omega. When a sigma factor is associated with the core the holoenzyme is formed, which can initiate transcription.

It carries out the reaction RNA(n) + a ribonucleoside 5'-triphosphate = RNA(n+1) + diphosphate. A non-essential component of RNA polymerase (RNAP). This is DNA-directed RNA polymerase subunit epsilon from Staphylococcus haemolyticus (strain JCSC1435).